The sequence spans 692 residues: Elongation factor G (692 aa).

One can recognise a tr-type G domain in the interval 8–282 (ENTRNIGIMA…AVIDYLPSPL (275 aa)). GTP-binding positions include 17-24 (AHIDAGKT), 81-85 (DTPGH), and 135-138 (NKMD).

This sequence belongs to the TRAFAC class translation factor GTPase superfamily. Classic translation factor GTPase family. EF-G/EF-2 subfamily.

It localises to the cytoplasm. In terms of biological role, catalyzes the GTP-dependent ribosomal translocation step during translation elongation. During this step, the ribosome changes from the pre-translocational (PRE) to the post-translocational (POST) state as the newly formed A-site-bound peptidyl-tRNA and P-site-bound deacylated tRNA move to the P and E sites, respectively. Catalyzes the coordinated movement of the two tRNA molecules, the mRNA and conformational changes in the ribosome. This is Elongation factor G from Bacillus cereus (strain Q1).